The primary structure comprises 208 residues: MKVVEVKHPLVKHKLGLMRSADINTKDFRALATEVGSLLTYEAATDLETELVEIDGWCGKVEVERIKGKKVTVVPILRAGLGMMDGVLEHIPSARISVVGIYRDEETLEPVPYFTKLANDVEERLAIIVDPMLATGGSMIATIDLLKKSGCKHIKVLVLVAAPEGINALQAAHPDIELFTASIDSHLNQHGYIVPGLGDAGDKIFGTK.

5-phospho-alpha-D-ribose 1-diphosphate-binding positions include R78, R103, and 130 to 138 (DPMLATGGS). Uracil contacts are provided by residues I193 and 198-200 (GDA). Residue D199 participates in 5-phospho-alpha-D-ribose 1-diphosphate binding.

It belongs to the UPRTase family. Mg(2+) is required as a cofactor.

The catalysed reaction is UMP + diphosphate = 5-phospho-alpha-D-ribose 1-diphosphate + uracil. Its pathway is pyrimidine metabolism; UMP biosynthesis via salvage pathway; UMP from uracil: step 1/1. Its activity is regulated as follows. Allosterically activated by GTP. Its function is as follows. Catalyzes the conversion of uracil and 5-phospho-alpha-D-ribose 1-diphosphate (PRPP) to UMP and diphosphate. This is Uracil phosphoribosyltransferase from Haemophilus ducreyi (strain 35000HP / ATCC 700724).